A 301-amino-acid polypeptide reads, in one-letter code: Mycothiol acetyltransferase (301 aa).

N-acetyltransferase domains are found at residues 7-150 (VDWQ…PPVD) and 152-301 (VRFA…AVEG). Residue D39 participates in 1D-myo-inositol 2-(L-cysteinylamino)-2-deoxy-alpha-D-glucopyranoside binding. Residues 80–82 (LVV) and 88–93 (RRGIGS) contribute to the acetyl-CoA site. E179, K220, and E228 together coordinate 1D-myo-inositol 2-(L-cysteinylamino)-2-deoxy-alpha-D-glucopyranoside. 232–234 (VGV) contributes to the acetyl-CoA binding site. Residue Y271 participates in 1D-myo-inositol 2-(L-cysteinylamino)-2-deoxy-alpha-D-glucopyranoside binding. 276–281 (NTAAVK) contributes to the acetyl-CoA binding site.

Belongs to the acetyltransferase family. MshD subfamily. As to quaternary structure, monomer.

The catalysed reaction is 1D-myo-inositol 2-(L-cysteinylamino)-2-deoxy-alpha-D-glucopyranoside + acetyl-CoA = mycothiol + CoA + H(+). In terms of biological role, catalyzes the transfer of acetyl from acetyl-CoA to desacetylmycothiol (Cys-GlcN-Ins) to form mycothiol. In Mycolicibacterium vanbaalenii (strain DSM 7251 / JCM 13017 / BCRC 16820 / KCTC 9966 / NRRL B-24157 / PYR-1) (Mycobacterium vanbaalenii), this protein is Mycothiol acetyltransferase.